The sequence spans 44 residues: Small, acid-soluble spore protein P (44 aa).

The interval 1-44 is disordered; sequence MSHTMGKNNREAKEKKGQPEPLSGSHKVKNRNHSRQKHHAHHDM. Residues 8–18 show a composition bias toward basic and acidic residues; sequence NNREAKEKKGQ. The span at 26-44 shows a compositional bias: basic residues; sequence HKVKNRNHSRQKHHAHHDM.

The protein belongs to the SspP family.

It localises to the spore core. The protein is Small, acid-soluble spore protein P of Bacillus cereus (strain ATCC 14579 / DSM 31 / CCUG 7414 / JCM 2152 / NBRC 15305 / NCIMB 9373 / NCTC 2599 / NRRL B-3711).